Here is a 564-residue protein sequence, read N- to C-terminus: Arginine--tRNA ligase (564 aa).

Positions 130-140 match the 'HIGH' region motif; it reads ANPTGSLHIGH.

This sequence belongs to the class-I aminoacyl-tRNA synthetase family. As to quaternary structure, monomer.

It localises to the cytoplasm. The enzyme catalyses tRNA(Arg) + L-arginine + ATP = L-arginyl-tRNA(Arg) + AMP + diphosphate. In Malacoplasma penetrans (strain HF-2) (Mycoplasma penetrans), this protein is Arginine--tRNA ligase.